The following is a 492-amino-acid chain: Ketol-acid reductoisomerase (NADP(+)) (492 aa).

Positions 15–208 (AQLGQCRFMD…GGDRAGVLQS (194 aa)) constitute a KARI N-terminal Rossmann domain. NADP(+) contacts are provided by residues 45 to 48 (CGAQ), Arg-68, Arg-76, Ser-78, and 108 to 110 (DKQ). His-132 is an active-site residue. An NADP(+)-binding site is contributed by Gly-158. 2 KARI C-terminal knotted domains span residues 209–353 (SFIA…DEQT) and 354–486 (YFDK…MTDM). 4 residues coordinate Mg(2+): Asp-217, Glu-221, Glu-389, and Glu-393. Residue Ser-414 participates in substrate binding.

This sequence belongs to the ketol-acid reductoisomerase family. The cofactor is Mg(2+).

It carries out the reaction (2R)-2,3-dihydroxy-3-methylbutanoate + NADP(+) = (2S)-2-acetolactate + NADPH + H(+). It catalyses the reaction (2R,3R)-2,3-dihydroxy-3-methylpentanoate + NADP(+) = (S)-2-ethyl-2-hydroxy-3-oxobutanoate + NADPH + H(+). Its pathway is amino-acid biosynthesis; L-isoleucine biosynthesis; L-isoleucine from 2-oxobutanoate: step 2/4. It functions in the pathway amino-acid biosynthesis; L-valine biosynthesis; L-valine from pyruvate: step 2/4. In terms of biological role, involved in the biosynthesis of branched-chain amino acids (BCAA). Catalyzes an alkyl-migration followed by a ketol-acid reduction of (S)-2-acetolactate (S2AL) to yield (R)-2,3-dihydroxy-isovalerate. In the isomerase reaction, S2AL is rearranged via a Mg-dependent methyl migration to produce 3-hydroxy-3-methyl-2-ketobutyrate (HMKB). In the reductase reaction, this 2-ketoacid undergoes a metal-dependent reduction by NADPH to yield (R)-2,3-dihydroxy-isovalerate. The protein is Ketol-acid reductoisomerase (NADP(+)) of Shewanella oneidensis (strain ATCC 700550 / JCM 31522 / CIP 106686 / LMG 19005 / NCIMB 14063 / MR-1).